Here is a 278-residue protein sequence, read N- to C-terminus: Hydroxyethylthiazole kinase (278 aa).

Methionine 49 contacts substrate. The ATP site is built by asparagine 125 and serine 171. Glycine 198 serves as a coordination point for substrate.

This sequence belongs to the Thz kinase family. It depends on Mg(2+) as a cofactor.

The enzyme catalyses 5-(2-hydroxyethyl)-4-methylthiazole + ATP = 4-methyl-5-(2-phosphooxyethyl)-thiazole + ADP + H(+). It participates in cofactor biosynthesis; thiamine diphosphate biosynthesis; 4-methyl-5-(2-phosphoethyl)-thiazole from 5-(2-hydroxyethyl)-4-methylthiazole: step 1/1. Its function is as follows. Catalyzes the phosphorylation of the hydroxyl group of 4-methyl-5-beta-hydroxyethylthiazole (THZ). In Natronomonas pharaonis (strain ATCC 35678 / DSM 2160 / CIP 103997 / JCM 8858 / NBRC 14720 / NCIMB 2260 / Gabara) (Halobacterium pharaonis), this protein is Hydroxyethylthiazole kinase.